A 295-amino-acid chain; its full sequence is Acetyl-coenzyme A carboxylase carboxyl transferase subunit beta (295 aa).

The disordered stretch occupies residues 1–20; sequence MSWLSKLMPSGIRTENTPAK. A CoA carboxyltransferase N-terminal domain is found at 28 to 295; that stretch reads LWEKCSNCGS…QPHPQDADAA (268 aa). Zn(2+) is bound by residues C32, C35, C51, and C54. The C4-type zinc-finger motif lies at 32–54; the sequence is CSNCGSALYGPELEENLEVCPKC.

It belongs to the AccD/PCCB family. In terms of assembly, acetyl-CoA carboxylase is a heterohexamer composed of biotin carboxyl carrier protein (AccB), biotin carboxylase (AccC) and two subunits each of ACCase subunit alpha (AccA) and ACCase subunit beta (AccD). It depends on Zn(2+) as a cofactor.

It is found in the cytoplasm. It catalyses the reaction N(6)-carboxybiotinyl-L-lysyl-[protein] + acetyl-CoA = N(6)-biotinyl-L-lysyl-[protein] + malonyl-CoA. The protein operates within lipid metabolism; malonyl-CoA biosynthesis; malonyl-CoA from acetyl-CoA: step 1/1. Component of the acetyl coenzyme A carboxylase (ACC) complex. Biotin carboxylase (BC) catalyzes the carboxylation of biotin on its carrier protein (BCCP) and then the CO(2) group is transferred by the transcarboxylase to acetyl-CoA to form malonyl-CoA. In Xanthomonas axonopodis pv. citri (strain 306), this protein is Acetyl-coenzyme A carboxylase carboxyl transferase subunit beta.